The following is a 1342-amino-acid chain: DNA-directed RNA polymerase subunit beta (1342 aa).

It belongs to the RNA polymerase beta chain family. The RNAP catalytic core consists of 2 alpha, 1 beta, 1 beta' and 1 omega subunit. When a sigma factor is associated with the core the holoenzyme is formed, which can initiate transcription.

It catalyses the reaction RNA(n) + a ribonucleoside 5'-triphosphate = RNA(n+1) + diphosphate. Its function is as follows. DNA-dependent RNA polymerase catalyzes the transcription of DNA into RNA using the four ribonucleoside triphosphates as substrates. The chain is DNA-directed RNA polymerase subunit beta from Mannheimia succiniciproducens (strain KCTC 0769BP / MBEL55E).